A 1028-amino-acid polypeptide reads, in one-letter code: Sporulation-specific protein 3 (1028 aa).

Its subcellular location is the prospore membrane. In terms of biological role, has a role in spore morphogenesis. Involved in the assembly of the forespore membrane. The sequence is that of Sporulation-specific protein 3 (spo3) from Schizosaccharomyces pombe (strain 972 / ATCC 24843) (Fission yeast).